The following is a 310-amino-acid chain: Nucleotide-binding protein Mmc1_3333 (310 aa).

19-26 (GLSGAGKS) provides a ligand contact to ATP.

Belongs to the RapZ-like family.

Functionally, displays ATPase and GTPase activities. The sequence is that of Nucleotide-binding protein Mmc1_3333 from Magnetococcus marinus (strain ATCC BAA-1437 / JCM 17883 / MC-1).